Consider the following 172-residue polypeptide: uncharacterized protein (172 aa).

This is an uncharacterized protein from Microplitis demolitor bracovirus (isolate Webb) (MdBV).